We begin with the raw amino-acid sequence, 249 residues long: Methyl-coenzyme M reductase subunit gamma (249 aa).

The disordered stretch occupies residues 43–62 (RAPGEEYPSVHPPLEELDEP). Arg-120 lines the coenzyme M pocket.

The protein belongs to the methyl-coenzyme M reductase gamma subunit family. As to quaternary structure, MCR is a hexamer of two alpha, two beta, and two gamma chains, forming a dimer of heterotrimers. Coenzyme F430 serves as cofactor.

The protein localises to the cytoplasm. It carries out the reaction coenzyme B + methyl-coenzyme M = methane + coenzyme M-coenzyme B heterodisulfide. It functions in the pathway one-carbon metabolism; methyl-coenzyme M reduction; methane from methyl-coenzyme M: step 1/1. Functionally, component of the methyl-coenzyme M reductase (MCR) I that catalyzes the reductive cleavage of methyl-coenzyme M (CoM-S-CH3 or 2-(methylthio)ethanesulfonate) using coenzyme B (CoB or 7-mercaptoheptanoylthreonine phosphate) as reductant which results in the production of methane and the mixed heterodisulfide of CoB and CoM (CoM-S-S-CoB). This is the final step in methanogenesis. The polypeptide is Methyl-coenzyme M reductase subunit gamma (mcrG) (Methanothermus fervidus).